The following is a 481-amino-acid chain: Arginine biosynthesis bifunctional protein ArgJ, chloroplastic (481 aa).

Substrate is bound by residues threonine 225, lysine 251, threonine 262, glutamate 349, asparagine 476, and threonine 481. Threonine 262 (nucleophile) is an active-site residue.

It belongs to the ArgJ family. As to quaternary structure, heterodimer of an alpha and a beta chain.

Its subcellular location is the plastid. It localises to the chloroplast. The enzyme catalyses N(2)-acetyl-L-ornithine + L-glutamate = N-acetyl-L-glutamate + L-ornithine. The catalysed reaction is L-glutamate + acetyl-CoA = N-acetyl-L-glutamate + CoA + H(+). Its pathway is amino-acid biosynthesis; L-arginine biosynthesis; L-ornithine and N-acetyl-L-glutamate from L-glutamate and N(2)-acetyl-L-ornithine (cyclic): step 1/1. It participates in amino-acid biosynthesis; L-arginine biosynthesis; N(2)-acetyl-L-ornithine from L-glutamate: step 1/4. Its function is as follows. Catalyzes two activities which are involved in the cyclic version of arginine biosynthesis: the synthesis of acetylglutamate from glutamate and acetyl-CoA, and of ornithine by transacetylation between acetylornithine and glutamate. This chain is Arginine biosynthesis bifunctional protein ArgJ, chloroplastic, found in Populus trichocarpa (Western balsam poplar).